We begin with the raw amino-acid sequence, 82 residues long: Putative Fe(2+) transport protein A (82 aa).

This sequence belongs to the FeoA family.

Its function is as follows. Might be involved in Fe(2+) ion uptake. The chain is Putative Fe(2+) transport protein A from Leptolyngbya boryana (Plectonema boryanum).